A 276-amino-acid chain; its full sequence is Ribosomal RNA small subunit methyltransferase A (276 aa).

S-adenosyl-L-methionine-binding residues include histidine 15, leucine 17, glycine 42, glutamate 64, aspartate 89, and asparagine 108.

The protein belongs to the class I-like SAM-binding methyltransferase superfamily. rRNA adenine N(6)-methyltransferase family. RsmA subfamily.

It is found in the cytoplasm. The enzyme catalyses adenosine(1518)/adenosine(1519) in 16S rRNA + 4 S-adenosyl-L-methionine = N(6)-dimethyladenosine(1518)/N(6)-dimethyladenosine(1519) in 16S rRNA + 4 S-adenosyl-L-homocysteine + 4 H(+). Functionally, specifically dimethylates two adjacent adenosines (A1518 and A1519) in the loop of a conserved hairpin near the 3'-end of 16S rRNA in the 30S particle. May play a critical role in biogenesis of 30S subunits. The chain is Ribosomal RNA small subunit methyltransferase A from Prochlorococcus marinus (strain MIT 9312).